A 578-amino-acid chain; its full sequence is NADH-quinone oxidoreductase subunit C/D (578 aa).

Residues 1–167 form an NADH dehydrogenase I subunit C region; that stretch reads MILSLFKLFG…DEFYFTKQKE (167 aa). The segment at 192 to 578 is NADH dehydrogenase I subunit D; it reads EYMFLNFGPN…IDFVMSDVDR (387 aa).

In the N-terminal section; belongs to the complex I 30 kDa subunit family. The protein in the C-terminal section; belongs to the complex I 49 kDa subunit family. As to quaternary structure, NDH-1 is composed of 13 different subunits. Subunits NuoB, CD, E, F, and G constitute the peripheral sector of the complex.

It localises to the cell inner membrane. It catalyses the reaction a quinone + NADH + 5 H(+)(in) = a quinol + NAD(+) + 4 H(+)(out). NDH-1 shuttles electrons from NADH, via FMN and iron-sulfur (Fe-S) centers, to quinones in the respiratory chain. The immediate electron acceptor for the enzyme in this species is believed to be ubiquinone. Couples the redox reaction to proton translocation (for every two electrons transferred, four hydrogen ions are translocated across the cytoplasmic membrane), and thus conserves the redox energy in a proton gradient. This chain is NADH-quinone oxidoreductase subunit C/D, found in Buchnera aphidicola subsp. Cinara cedri (strain Cc).